A 37-amino-acid chain; its full sequence is Dolichyl-diphosphooligosaccharide--protein glycosyltransferase subunit 4 (37 aa).

Residues Met-1–Asp-4 lie on the Lumenal side of the membrane. Residues Val-5–Tyr-25 form a helical membrane-spanning segment. Residues His-26–Glu-37 are Cytoplasmic-facing.

The protein belongs to the OST4 family. Component of the oligosaccharyltransferase (OST) complex. OST exists in two different complex forms which contain common core subunits RPN1, RPN2, OST48, OST4, DAD1 and TMEM258, either STT3A or STT3B as catalytic subunits, and form-specific accessory subunits. STT3A complex assembly occurs through the formation of 3 subcomplexes. Subcomplex 1 contains RPN1 and TMEM258, subcomplex 2 contains the STT3A-specific subunits STT3A, DC2/OSTC, and KCP2 as well as the core subunit OST4, and subcomplex 3 contains RPN2, DAD1, and OST48. The STT3A complex can form stable complexes with the Sec61 complex or with both the Sec61 and TRAP complexes.

It is found in the endoplasmic reticulum. It localises to the endoplasmic reticulum membrane. It participates in protein modification; protein glycosylation. In terms of biological role, subunit of the oligosaccharyl transferase (OST) complex that catalyzes the initial transfer of a defined glycan (Glc(3)Man(9)GlcNAc(2) in eukaryotes) from the lipid carrier dolichol-pyrophosphate to an asparagine residue within an Asn-X-Ser/Thr consensus motif in nascent polypeptide chains, the first step in protein N-glycosylation. N-glycosylation occurs cotranslationally and the complex associates with the Sec61 complex at the channel-forming translocon complex that mediates protein translocation across the endoplasmic reticulum (ER). All subunits are required for a maximal enzyme activity. Specifically involved in maintaining stability of STT3A-containing OST complexes. The chain is Dolichyl-diphosphooligosaccharide--protein glycosyltransferase subunit 4 from Homo sapiens (Human).